A 303-amino-acid chain; its full sequence is uncharacterized protein (303 aa).

This is an uncharacterized protein from Bacillus subtilis (strain 168).